Here is a 471-residue protein sequence, read N- to C-terminus: Cysteine--tRNA ligase (471 aa).

C30 contributes to the Zn(2+) binding site. The 'HIGH' region signature appears at 32 to 42 (PTVYNFAHIGN). Zn(2+)-binding residues include C212, H237, and E241. Positions 270-274 (KMSKS) match the 'KMSKS' region motif. K273 contributes to the ATP binding site.

Belongs to the class-I aminoacyl-tRNA synthetase family. As to quaternary structure, monomer. Zn(2+) serves as cofactor.

It is found in the cytoplasm. The catalysed reaction is tRNA(Cys) + L-cysteine + ATP = L-cysteinyl-tRNA(Cys) + AMP + diphosphate. This is Cysteine--tRNA ligase from Leptospira interrogans serogroup Icterohaemorrhagiae serovar copenhageni (strain Fiocruz L1-130).